A 282-amino-acid polypeptide reads, in one-letter code: Bis(5'-nucleosyl)-tetraphosphatase, symmetrical (282 aa).

Belongs to the Ap4A hydrolase family.

The enzyme catalyses P(1),P(4)-bis(5'-adenosyl) tetraphosphate + H2O = 2 ADP + 2 H(+). Functionally, hydrolyzes diadenosine 5',5'''-P1,P4-tetraphosphate to yield ADP. The polypeptide is Bis(5'-nucleosyl)-tetraphosphatase, symmetrical (Burkholderia pseudomallei (strain 1106a)).